Here is a 1191-residue protein sequence, read N- to C-terminus: Putative glycoside hydrolase 22789 (1191 aa).

Positions 173-187 (PSSSGASSVLPSPSA) are enriched in low complexity. The disordered stretch occupies residues 173 to 221 (PSSSGASSVLPSPSAHTPDAATDANHLPNPDPASGRQELTRAGRPARKK).

It belongs to the glycoside hydrolase-like 3 (GHL3) family.

The polypeptide is Putative glycoside hydrolase 22789 (Monosiga brevicollis (Choanoflagellate)).